The following is a 94-amino-acid chain: Integration host factor subunit beta (94 aa).

It belongs to the bacterial histone-like protein family. Heterodimer of an alpha and a beta chain.

This protein is one of the two subunits of integration host factor, a specific DNA-binding protein that functions in genetic recombination as well as in transcriptional and translational control. The chain is Integration host factor subunit beta from Serratia proteamaculans (strain 568).